Reading from the N-terminus, the 136-residue chain is Methylglyoxal synthase (136 aa).

Residues 1 to 136 (MKIALIAHDR…REVVREENEA (136 aa)) enclose the MGS-like domain. Substrate-binding positions include His8, Lys12, 34-37 (TGTT), and 54-55 (SG). Catalysis depends on Asp60, which acts as the Proton donor/acceptor. Residue His87 coordinates substrate.

The protein belongs to the methylglyoxal synthase family.

It catalyses the reaction dihydroxyacetone phosphate = methylglyoxal + phosphate. In terms of biological role, catalyzes the formation of methylglyoxal from dihydroxyacetone phosphate. This chain is Methylglyoxal synthase, found in Brevibacillus brevis (strain 47 / JCM 6285 / NBRC 100599).